The following is a 336-amino-acid chain: Ferredoxin--NADP reductase (336 aa).

Positions 18, 37, 45, 50, 92, 127, 290, and 331 each coordinate FAD.

This sequence belongs to the ferredoxin--NADP reductase type 2 family. Homodimer. The cofactor is FAD.

The catalysed reaction is 2 reduced [2Fe-2S]-[ferredoxin] + NADP(+) + H(+) = 2 oxidized [2Fe-2S]-[ferredoxin] + NADPH. This is Ferredoxin--NADP reductase from Symbiobacterium thermophilum (strain DSM 24528 / JCM 14929 / IAM 14863 / T).